The following is a 1629-amino-acid chain: MALQSPGATGASSSVSRLLSSAKLSSTKTIFSVDFVRSYCISKGTKRRNELSGFRGYSPLLKSSLRSPFSVKAILNSDRAAGDASSSFSDLKPQVAYLEDIISERGACGVGFIANLENKATHKIVNDALIALGCMEHRGGCGSDNTSGDGSGLMTSIPWDLFNEWAEKQGIASFDRTHTGVGMLFLPRDDNIRKEAKKVITSIFEKEGLEVLGWRDVPVEASIVGHNAKQTMPNTEQVFVRIVKDDKVDDVERELYICRKLIERAVASESWASELYFSSLSNQTIVYKGMLRSEVLGLFYPDLQNDLYKSPFAIYHRRFSTNTSPRWHLAQPMRFLGHNGEINTIQGNLNWMTSREASLRSPVWHGRENDIRPISNPKASDSANLDSAAELLIRSGRTPEESLMILVPEAYKNHPTLMIKYPEAVDFYDYYKGQMEPWDGPALVLFSDGKTVGACLDRNGLRPARYWRTSDNVVYVASEVGVLPMDESKVTMKGRLGPGMMISVDLENGQVYENTEVKKRVASYNPYGKWVSENLRNLKPSNYLSSAILETDETLRRQQAFGYSSEDVQMVIESMAAQGKEPTFCMGDDTPVAVLSQKPHMLYDYFKQRFAQVTNPAIDPLREGLVMSLEVNIGKRGNILEVGPQNVSQVVLSGPVLNERELEGLLGDPLLKSQILPTFFDIRRGIEGSLKKGLLKLCEAADEAVRNGSQVLVLSDRSDNPEPTRPAIPMLLAVGAVHQHLIQNGLRMSASIIADTAQCFSTHHFACLIGYGASAICPHLALETCRQWRLSNKTVNMMRNGKMPTVTMEQAQKNYRKAVNTGLLKVLSKMGISLFSSYCGAQIFEIYGLGNEVVEFSFRGSASQIGGLTLDELARETLTFWVRAFSEDTAKRLENFGFIQFRPGGEYHGNNPEMSKLLHKAVREKSETAYAVYQQHLANRPITVFRDLLEFKSDRNPIPVGKVEPASSIVERFCTGGMSLGAISRETHETIAIAMNRLGGKSNSGEGGEDPIRWKPLTDVVDGYSSTLPHLKGLRNGDTATSAIKQVASGRFGVTPTFLVNADQLEIKVAQGAKPGEGGQLPGKKVSAYIARLRNSKPGVPLISPPPHHDIYSIEDLAQLIFDLHQVNPKAKVSVKLVSETGIGTVASGVAKANADIIQISGYDGGTGASPISSIKHAGGPWELGLAETQKTLIGNGLRERVIIRVDGGFKSGVDVLIAAAMGADEYGFGTLAMIATGCIMARICHTNNCPVGVASQREELRARFPGLPGDLVNFFLYIAEEVRGILAQLGYEKLDDIIGRTDLLKARDISLVKTHLDLSYLLSSVGLPKRSSTSIRKQEVHSNGPVLDDTLLQDPEIMDAIENEKTVHKTMSIYNVDRSVCGRIAGVIAKKYGDTGFAGQLNLTFTGSAGQSFACFLTPGMNIRLVGEANDYVGKGMAGGEVVILPVESTGFRPEDATIVGNTCLYGATGGLLFVRGKAGERFAVRNSLAQAVVEGTGDHCCEYMTGGCVVILGKVGRNVAAGMTGGLAYILDEDNTLLPKMNKEIVKIQRVTSPVGQTQLKSLIQAHVEKTGSSKGAMIVEEWDKYLAMFWQLVPPSEEDTPEANSDHILKTTTGDEEQVSSTLAEK.

The N-terminal 107 residues, 1–107 (MALQSPGATG…LEDIISERGA (107 aa)), are a transit peptide targeting the chloroplast. Residue Cys-108 is the For GATase activity of the active site. A Glutamine amidotransferase type-2 domain is found at 108-507 (CGVGFIANLE…PGMMISVDLE (400 aa)). 1186–1243 (LAETQKTLIGNGLRERVIIRVDGGFKSGVDVLIAAAMGADEYGFGTLAMIATGCIMAR) is a binding site for FMN. Residues Cys-1239, Cys-1245, and Cys-1250 each coordinate [3Fe-4S] cluster. Residues 1599–1629 (SEEDTPEANSDHILKTTTGDEEQVSSTLAEK) form a disordered region.

It belongs to the glutamate synthase family. The cofactor is [3Fe-4S] cluster. It depends on FAD as a cofactor. Requires FMN as cofactor. Expressed predominantly in roots and slightly in leaves. Low expression in the leaf mesophyll and phloem companion cell-sieve element complex.

The protein resides in the plastid. The protein localises to the chloroplast stroma. It catalyses the reaction 2 oxidized [2Fe-2S]-[ferredoxin] + 2 L-glutamate = L-glutamine + 2 reduced [2Fe-2S]-[ferredoxin] + 2-oxoglutarate + 2 H(+). It functions in the pathway amino-acid biosynthesis; L-glutamate biosynthesis via GLT pathway; L-glutamate from 2-oxoglutarate and L-glutamine (ferredoxin route): step 1/1. The protein operates within energy metabolism; nitrogen metabolism. In terms of biological role, may play a role in primary nitrogen assimilation in roots. Could supply a constitutive level of glutamate to maintain a basal level of protein synthesis. The sequence is that of Ferredoxin-dependent glutamate synthase 2, chloroplastic (GLU2) from Arabidopsis thaliana (Mouse-ear cress).